A 446-amino-acid chain; its full sequence is Tubulin alpha chain-like 3 (446 aa).

Residues Met1–Cys4 carry the MREC motif motif. Positions 11, 78, 147, 151, 152, 186, 213, and 235 each coordinate GTP. Glu78 lines the Mg(2+) pocket. The active site involves Glu261.

Belongs to the tubulin family. As to quaternary structure, dimer of alpha and beta chains. A typical microtubule is a hollow water-filled tube with an outer diameter of 25 nm and an inner diameter of 15 nM. Alpha-beta heterodimers associate head-to-tail to form protofilaments running lengthwise along the microtubule wall with the beta-tubulin subunit facing the microtubule plus end conferring a structural polarity. Microtubules usually have 13 protofilaments but different protofilament numbers can be found in some organisms and specialized cells. It depends on Mg(2+) as a cofactor. In terms of processing, some glutamate residues at the C-terminus are polyglutamylated, resulting in polyglutamate chains on the gamma-carboxyl group. Polyglutamylation plays a key role in microtubule severing by spastin (SPAST). SPAST preferentially recognizes and acts on microtubules decorated with short polyglutamate tails: severing activity by SPAST increases as the number of glutamates per tubulin rises from one to eight, but decreases beyond this glutamylation threshold. Glutamylation is also involved in cilia motility. Some glutamate residues at the C-terminus are monoglycylated but not polyglycylated due to the absence of functional TTLL10 in human. Monoglycylation is mainly limited to tubulin incorporated into cilia and flagella axonemes, which is required for their stability and maintenance. Flagella glycylation controls sperm motility. Both polyglutamylation and monoglycylation can coexist on the same protein on adjacent residues, and lowering glycylation levels increases polyglutamylation, and reciprocally.

It is found in the cytoplasm. The protein resides in the cytoskeleton. It carries out the reaction GTP + H2O = GDP + phosphate + H(+). Tubulin is the major constituent of microtubules, a cylinder consisting of laterally associated linear protofilaments composed of alpha- and beta-tubulin heterodimers. Microtubules grow by the addition of GTP-tubulin dimers to the microtubule end, where a stabilizing cap forms. Below the cap, tubulin dimers are in GDP-bound state, owing to GTPase activity of alpha-tubulin. In Homo sapiens (Human), this protein is Tubulin alpha chain-like 3 (TUBAL3).